Reading from the N-terminus, the 142-residue chain is Large ribosomal subunit protein uL11 (142 aa).

This sequence belongs to the universal ribosomal protein uL11 family. As to quaternary structure, part of the ribosomal stalk of the 50S ribosomal subunit. Interacts with L10 and the large rRNA to form the base of the stalk. L10 forms an elongated spine to which L12 dimers bind in a sequential fashion forming a multimeric L10(L12)X complex. One or more lysine residues are methylated.

Functionally, forms part of the ribosomal stalk which helps the ribosome interact with GTP-bound translation factors. This Lachnoclostridium phytofermentans (strain ATCC 700394 / DSM 18823 / ISDg) (Clostridium phytofermentans) protein is Large ribosomal subunit protein uL11.